We begin with the raw amino-acid sequence, 1456 residues long: Retrovirus-related Pol polyprotein from transposon RE2 (1456 aa).

The disordered stretch occupies residues N205–K252. The segment covering R210–R245 has biased composition (low complexity). The CCHC-type zinc-finger motif lies at R257–Q273. The segment covering Q276–T291 has biased composition (low complexity). Residues Q276–P295 are disordered. D313 acts as the For protease activity in catalysis. One can recognise an Integrase catalytic domain in the interval T498–P661. Mg(2+)-binding residues include D509 and D571. Residues S738–H754 show a composition bias toward polar residues. Positions S738–P896 are disordered. The span at S793–S814 shows a compositional bias: low complexity. Residues N816–T827 show a composition bias toward polar residues. Low complexity-rich tracts occupy residues Q828 to N841 and S849 to T886. Positions P887–P896 are enriched in pro residues. The region spanning N965 to M1208 is the Reverse transcriptase Ty1/copia-type domain.

The enzyme catalyses DNA(n) + a 2'-deoxyribonucleoside 5'-triphosphate = DNA(n+1) + diphosphate. This Arabidopsis thaliana (Mouse-ear cress) protein is Retrovirus-related Pol polyprotein from transposon RE2 (RE2).